The sequence spans 198 residues: Recombination protein RecR (198 aa).

The segment at 57–72 (CSICGNLTDDDPCHIC) adopts a C4-type zinc-finger fold. Positions 80–175 (TTILVVEDAK…KVTRLARGLA (96 aa)) constitute a Toprim domain.

The protein belongs to the RecR family.

In terms of biological role, may play a role in DNA repair. It seems to be involved in an RecBC-independent recombinational process of DNA repair. It may act with RecF and RecO. This Streptococcus pyogenes serotype M1 protein is Recombination protein RecR.